Consider the following 478-residue polypeptide: Ankyrin repeat and BTB/POZ domain-containing protein 1 (478 aa).

ANK repeat units lie at residues 1-31 (MDTS…EVNV) and 35-64 (WDST…RCEA). 2 BTB domains span residues 115-182 (SDVV…DIGV) and 272-346 (PDIC…ELPP). Positions 450–478 (TVQTYSAIEEAQQQLRALENLLVSIGLDC) form a coiled coil.

Its subcellular location is the cytoplasm. In terms of biological role, may act as a mediator of the PTEN growth-suppressive signaling pathway. May play a role in developmental processes. The sequence is that of Ankyrin repeat and BTB/POZ domain-containing protein 1 from Rattus norvegicus (Rat).